The sequence spans 151 residues: 3-dehydroquinate dehydratase (151 aa).

Catalysis depends on Tyr26, which acts as the Proton acceptor. Substrate is bound by residues Asn77, His83, and Asp90. His103 functions as the Proton donor in the catalytic mechanism. Residues 104 to 105 (LS) and Arg114 each bind substrate.

The protein belongs to the type-II 3-dehydroquinase family. In terms of assembly, homododecamer.

The enzyme catalyses 3-dehydroquinate = 3-dehydroshikimate + H2O. The protein operates within metabolic intermediate biosynthesis; chorismate biosynthesis; chorismate from D-erythrose 4-phosphate and phosphoenolpyruvate: step 3/7. Functionally, catalyzes a trans-dehydration via an enolate intermediate. In Pelodictyon phaeoclathratiforme (strain DSM 5477 / BU-1), this protein is 3-dehydroquinate dehydratase.